The primary structure comprises 443 residues: Trigger factor (443 aa).

The PPIase FKBP-type domain occupies 165–250; the sequence is GDQIVMDFLG…VKEVKKPVPA (86 aa).

The protein belongs to the FKBP-type PPIase family. Tig subfamily.

It localises to the cytoplasm. It catalyses the reaction [protein]-peptidylproline (omega=180) = [protein]-peptidylproline (omega=0). Functionally, involved in protein export. Acts as a chaperone by maintaining the newly synthesized protein in an open conformation. Functions as a peptidyl-prolyl cis-trans isomerase. This is Trigger factor from Roseobacter denitrificans (strain ATCC 33942 / OCh 114) (Erythrobacter sp. (strain OCh 114)).